The following is a 517-amino-acid chain: Nuclear receptor subfamily 5 group A member 2 (517 aa).

The nuclear receptor DNA-binding region spans 43-118; sequence DEMCPVCGDK…VGMKLEAVRA (76 aa). Cys46, Cys49, Cys63, Cys66, Cys82, Cys88, Cys98, and Cys101 together coordinate Zn(2+). NR C4-type zinc fingers lie at residues 46 to 66 and 82 to 101; these read CPVCGDKVSGYHYGLLTCESC and CIENQSCQIDKTQRKRCPYC. Residues 112 to 127 are C-terminal extension (CTE); the sequence is KLEAVRADRMRGGRNK. The FTZ-F1 box motif lies at 128 to 147; it reads FGPMYKRDRALKQQKKALIR. Positions 182-211 are disordered; the sequence is GLPLSHHHHHHHHHHHHSSSSAGLPPADFD. Residues 186-199 are compositionally biased toward basic residues; the sequence is SHHHHHHHHHHHHS. Positions 276–515 constitute an NR LBD domain; that stretch reads SFPHLVVELL…NLLIEMLHAK (240 aa). A phospholipid derivative is bound by residues 397–400, Tyr492, and Lys496; that span reads GATL. Positions 504–515 are AF-2; it reads CNNLLIEMLHAK.

This sequence belongs to the nuclear hormone receptor family. NR5 subfamily. As to quaternary structure, monomer; Binds DNA as a monomer.

The protein localises to the nucleus. It is found in the chromosome. Its function is as follows. Orphan nuclear receptor that binds DNA as a monomer to the 5'-TCAAGGCCA-3' sequence and controls expression of target genes: regulates key biological processes, such as cholesterol and bile acid synthesis pathways, as well as cartilage, liver and pancreas morphogenesis. Ligand-binding causes conformational change which causes recruitment of coactivators, promoting target gene activation. The specific ligand is unknown, but specific phospholipids, such as phosphatidylethanolamine, phosphatidylserine, dilauroyl phosphatidylcholine and diundecanoyl phosphatidylcholine can act as ligand in vitro. Acts as a pioneer transcription factor, which unwraps target DNA from histones and elicits local opening of closed chromatin. Involved in the formation of connective tissue in lower jaw. In terms of biological role, lacks transcription factor activity; unable to activate expression of target genes. The polypeptide is Nuclear receptor subfamily 5 group A member 2 (Danio rerio (Zebrafish)).